The primary structure comprises 445 residues: uncharacterized protein (445 aa).

The next 8 helical transmembrane spans lie at 16 to 36, 52 to 72, 98 to 118, 168 to 188, 219 to 239, 243 to 263, 283 to 303, and 366 to 386; these read IVSL…AFLI, LLAS…GYLL, VHSL…AGGC, GLMF…LGIV, ASAL…VWLI, GWSV…GALG, LIAA…NEGS, and AAYP…VPLV. The tract at residues 417–445 is disordered; the sequence is AWPNGPRRPGPPGQPRRVRQGGTAITPPT.

Belongs to the major facilitator superfamily.

It is found in the cell membrane. This is an uncharacterized protein from Mycobacterium tuberculosis (strain CDC 1551 / Oshkosh).